A 59-amino-acid chain; its full sequence is Conorfamide-Ep1 (59 aa).

The signal sequence occupies residues Met1–Ala19. Residues Thr20–Lys25 constitute a propeptide that is removed on maturation. Position 43 is an isoleucine amide (Ile43). A propeptide spanning residues Arg45–Phe59 is cleaved from the precursor.

It belongs to the FARP (FMRFamide related peptide) family. Expressed by the venom duct.

Its subcellular location is the secreted. Functionally, neurotoxin that is active on vertebrates. When tested at high doses (10 uM), the toxin affects all zebrafish and mouse DRG neurons in culture, which could be an indication of an effect on a widely expressed receptor or ion channel found in both species. At low doses (1 uM), the effects of the toxin are confined to a specific subpopulation of zebrafish and mouse DRG neurons. In vivo, it induces long-lasting dramatic alterations in the locomotor behavior of zebrafish larvae. It rapidly induces hypoactivity and death of larvae at high doses and it causes hyperactivity at lower doses. In zebrafish adults, intramuscular injection causes the decrease of the movements and visited spaces. In mice, intracranial injection causes lethargy and prolonges sleeping phases and reduced movement. The chain is Conorfamide-Ep1 from Conus episcopatus (Bishop's cone).